Here is a 543-residue protein sequence, read N- to C-terminus: CTP synthase (543 aa).

Positions Met-1 to Ile-265 are amidoligase domain. CTP is bound at residue Ser-13. A UTP-binding site is contributed by Ser-13. Ser-14–Leu-19 contacts ATP. Tyr-54 provides a ligand contact to L-glutamine. Residue Asp-71 coordinates ATP. 2 residues coordinate Mg(2+): Asp-71 and Glu-139. CTP contacts are provided by residues Asp-146–Glu-148, Lys-186–Gln-191, and Lys-222. Residues Lys-186 to Gln-191 and Lys-222 contribute to the UTP site. Arg-238–Ala-240 lines the ATP pocket. The 252-residue stretch at Thr-291–Leu-542 folds into the Glutamine amidotransferase type-1 domain. Residue Gly-353 coordinates L-glutamine. Residue Cys-380 is the Nucleophile; for glutamine hydrolysis of the active site. L-glutamine is bound by residues Phe-381 to Gln-384, Glu-404, and Arg-470. Residues His-515 and Glu-517 contribute to the active site.

Belongs to the CTP synthase family. As to quaternary structure, homotetramer.

The enzyme catalyses UTP + L-glutamine + ATP + H2O = CTP + L-glutamate + ADP + phosphate + 2 H(+). It catalyses the reaction L-glutamine + H2O = L-glutamate + NH4(+). The catalysed reaction is UTP + NH4(+) + ATP = CTP + ADP + phosphate + 2 H(+). Its pathway is pyrimidine metabolism; CTP biosynthesis via de novo pathway; CTP from UDP: step 2/2. Allosterically activated by GTP, when glutamine is the substrate; GTP has no effect on the reaction when ammonia is the substrate. The allosteric effector GTP functions by stabilizing the protein conformation that binds the tetrahedral intermediate(s) formed during glutamine hydrolysis. Inhibited by the product CTP, via allosteric rather than competitive inhibition. Catalyzes the ATP-dependent amination of UTP to CTP with either L-glutamine or ammonia as the source of nitrogen. Regulates intracellular CTP levels through interactions with the four ribonucleotide triphosphates. This Rhodopseudomonas palustris (strain BisA53) protein is CTP synthase.